A 60-amino-acid polypeptide reads, in one-letter code: Mastoparan-B (60 aa).

The signal sequence occupies residues Met-1–Ala-27. AXPX repeat units lie at residues Ala-27–Leu-30, Ala-31–Leu-34, Ala-35–Asn-38, and Ala-41–Glu-44. The propeptide occupies Asp-28–Ala-45. A Leucine amide modification is found at Leu-59.

The protein belongs to the MCD family. Mastoparan subfamily. As to expression, expressed by the venom gland.

Its subcellular location is the secreted. It is found in the target cell membrane. In terms of biological role, antimicrobial and mast cell degranulating peptide. Has broad spectrum antibacterial activity against both Gram-positive (S.aureus MIC=96-128 ug/ml, S.xylosus MIC=2 ug/ml, S.alactolyticus MIC=32 ug/ml, and S.choleraesuis MIC=32 ug/ml) and Gram-negative bacteria (C.koseri MIC=6 ug/ml, E.coli MIC=3-16 ug/ml, K.pneumoniae MIC=128 ug/ml, P.aerugiosa MIC=128 ug/ml, S.typhimurium MIC=64 ug/ml, V.parahamelytics MIC=32 ug/ml, and S.enterica), as well as on fungi (C.albicans, C.glabrata, and C.neoformans). Does not show antimicrobial activity against S.mutans. Affects membrane permeability of E.coli. Also acts as a mast cell degranulating peptide, that causes liberation of histamine from rat peritoneal mast cells. Its mast cell degranulation activity may be related to the activation of G-protein coupled receptors in mast cells as well as interaction with other proteins located in cell endosomal membranes in the mast cells. Whether this peptide shows hemolytic activities is controversial, as Lin et al., 2011 and Ho et al., 1991 found a hemolytic activity on sheep, chicken and human erythrocytes, whereas Kim et al., 2016 found no hemolytic activity on human erythrocytes. In vivo, induces edema in the rat paw. This chain is Mastoparan-B, found in Vespa basalis (Hornet).